Reading from the N-terminus, the 662-residue chain is MEARLVWGVLVGPLRVLCVLCCLLGHAIAAPSPIIKFPGDVSPKTDKELAVQYLNTFYGCPKESCNLFVLKDTLKKMQKFFGLPQTGDLDQNTIETMRKPRCGNPDVANYNFFPRKPKWDKNQITYRIIGYTPDLDPETVDDAFARALKVWSDVTPLRFSRIHDGEADIMINFGRWEHGDGYPFDGKDGLLAHAFAPGTGVGGDSHFDDDELWTLGEGQVVRVKYGNADGEYCKFPFLFNGREYSSCTDTGRSDGFLWCSTTYNFEKDGKYGFCPHEALFTMGGNGDGQPCKFPFRFQGTSYNSCTTEGRTDGYRWCGTTEDYDRDKKYGFCPETAMSTVGGNSEGAPCVFPFTFLGNKYESCTSAGRSDGKVWCATTTNYDDDRKWGFCPDQGYSLFLVAAHEFGHAMGLEHSQDPGALMAPIYTYTKNFRLSNDDIKGIQELYGPSPDADTDTGTGPTPTLGPVTPEICKQDIVFDGIAQIRGEIFFFKDRFIWRTVTPRDKPTGPLLVATFWPELPEKIDAVYEAPQEEKAVFFAGNEYWVYSASTLERGYPKPLTSLGLPPDVQQVDAAFNWSKNKKTYIFSGDKFWRYNEVKKKMDPGFPKLIADSWNAIPDNLDAVVDLQGGGHSYFFKGAYYLKLENQSLKSVKFGSIKSDWLGC.

The signal sequence occupies residues 1-29 (MEARLVWGVLVGPLRVLCVLCCLLGHAIA). The propeptide at 30-109 (APSPIIKFPG…PRCGNPDVAN (80 aa)) is activation peptide. The short motif at 100 to 107 (PRCGNPDV) is the Cysteine switch element. Cysteine 102 is a Zn(2+) binding site. The segment at 110–221 (YNFFPRKPKW…LWTLGEGQVV (112 aa)) is collagenase-like 1. 2 residues coordinate Ca(2+): aspartate 134 and aspartate 168. Positions 178 and 180 each coordinate Zn(2+). Residues aspartate 185 and glycine 186 each contribute to the Ca(2+) site. Histidine 193 lines the Zn(2+) pocket. Residues glycine 200, glycine 202, and aspartate 204 each contribute to the Ca(2+) site. Histidine 206 contacts Zn(2+). Ca(2+) contacts are provided by aspartate 208, aspartate 209, and glutamate 211. The tract at residues 222 to 396 (RVKYGNADGE…WGFCPDQGYS (175 aa)) is collagen-binding. Fibronectin type-II domains are found at residues 228–276 (ADGE…FCPH), 286–334 (GDGQ…FCPE), and 344–392 (SEGA…FCPD). 6 disulfide bridges follow: cysteine 233-cysteine 259, cysteine 247-cysteine 274, cysteine 291-cysteine 317, cysteine 305-cysteine 332, cysteine 349-cysteine 375, and cysteine 363-cysteine 390. The tract at residues 397–467 (LFLVAAHEFG…GPTPTLGPVT (71 aa)) is collagenase-like 2. Histidine 403 contributes to the Zn(2+) binding site. Glutamate 404 is a catalytic residue. Residues histidine 407 and histidine 413 each contribute to the Zn(2+) site. The required for inhibitor TIMP2 binding stretch occupies residues 414–662 (SQDPGALMAP…GSIKSDWLGC (249 aa)). A disulfide bridge links cysteine 471 with cysteine 662. Hemopexin repeat units follow at residues 474–518 (DIVF…WPEL), 519–565 (PEKI…GLPP), 567–615 (VQQV…WNAI), and 616–662 (PDNL…WLGC). Residues aspartate 478, aspartate 523, and aspartate 571 each coordinate Ca(2+). An N-linked (GlcNAc...) asparagine glycan is attached at asparagine 575. Position 620 (aspartate 620) interacts with Ca(2+). The N-linked (GlcNAc...) asparagine glycan is linked to asparagine 644.

The protein belongs to the peptidase M10A family. As to quaternary structure, interacts (via the C-terminal hemopexin-like domains-containing region) with the integrin alpha-V/beta-3; the interaction promotes vascular invasion in angiogenic vessels and melamoma cells. Interacts (via the C-terminal PEX domain) with TIMP2 (via the C-terminal); the interaction inhibits the degradation activity. Interacts with GSK3B. Ca(2+) is required as a cofactor. The cofactor is Zn(2+). In terms of processing, phosphorylation on multiple sites modulates enzymatic activity. Phosphorylated by PKC in vitro. The propeptide is processed by MMP14 (MT-MMP1) and MMP16 (MT-MMP3). Autocatalytic cleavage in the C-terminal produces the anti-angiogenic peptide, PEX. This processing appears to be facilitated by binding integrin integrinv/beta3.

It is found in the secreted. Its subcellular location is the extracellular space. It localises to the extracellular matrix. The protein localises to the membrane. The protein resides in the nucleus. The enzyme catalyses Cleavage of gelatin type I and collagen types IV, V, VII, X. Cleaves the collagen-like sequence Pro-Gln-Gly-|-Ile-Ala-Gly-Gln.. In terms of biological role, ubiquitinous metalloproteinase that is involved in diverse functions such as remodeling of the vasculature, angiogenesis, tissue repair, tumor invasion, inflammation, and atherosclerotic plaque rupture. As well as degrading extracellular matrix proteins, can also act on several nonmatrix proteins such as big endothelial 1 and beta-type CGRP promoting vasoconstriction. Also cleaves KISS at a Gly-|-Leu bond. Appears to have a role in myocardial cell death pathways. Contributes to myocardial oxidative stress by regulating the activity of GSK3beta. Cleaves GSK3beta in vitro. Involved in the formation of the fibrovascular tissues. Its function is as follows. PEX, the C-terminal non-catalytic fragment of MMP2, possesses anti-angiogenic and anti-tumor properties and inhibits cell migration and cell adhesion to FGF2 and vitronectin. Ligand for integrin alpha-v/beta3 on the surface of blood vessels. The polypeptide is 72 kDa type IV collagenase (Mmp2) (Rattus norvegicus (Rat)).